The primary structure comprises 2293 residues: G-protein coupled receptor 179 (2293 aa).

A signal peptide spans 1–27 (MGARAVVISSLAWGLLSCCFLCSGALG). The interval 62 to 245 (FLYSGDVQRL…CHEGQLRPGW (184 aa)) is cache-like region. N-linked (GlcNAc...) asparagine glycosylation occurs at Asn-75. A disulfide bridge connects residues Cys-76 and Cys-236. N-linked (GlcNAc...) asparagine glycosylation is present at Asn-298. A run of 7 helical transmembrane segments spans residues 383-403 (AVLA…LVAY), 416-436 (IVLL…VFIL), 445-465 (CVAL…TIIL), 494-514 (LGQL…GALE), 544-564 (YIMV…CYAT), 585-602 (LLLS…VPSL), and 608-628 (LLLF…LIFI). Residues Cys-445 and Cys-537 are joined by a disulfide bond. Asn-661 carries an N-linked (GlcNAc...) asparagine glycan. The tract at residues 733–812 (QHSRDSGSLG…GRESLADGPP (80 aa)) is disordered. The segment covering 738–759 (SGSLGLGSLPGSSRRRLLSSSL) has biased composition (low complexity). The span at 773-782 (STYDHHREHN) shows a compositional bias: basic and acidic residues. N-linked (GlcNAc...) asparagine glycosylation is present at Asn-823. Disordered regions lie at residues 872-935 (EERK…HPPI), 1046-1235 (GTGE…NPAL), 1275-1294 (ERTE…LSRS), 1326-1345 (EAVC…QLVH), 1388-1411 (GTST…ATFW), 1479-1560 (ELAG…HGGS), 1578-1770 (ATLS…VCPW), 1792-1828 (TVGK…TSKG), 1844-1882 (WKPP…KGEL), 1924-2051 (SSSH…GSEK), and 2212-2293 (FLPE…WDCE). A compositionally biased stretch (polar residues) spans 1080 to 1089 (LKTPLQQGSV). Basic and acidic residues-rich tracts occupy residues 1105 to 1123 (TYKE…KGKP), 1173 to 1186 (CQKE…DRNK), and 1275 to 1286 (ERTEGGSLEKKP). Basic and acidic residues-rich tracts occupy residues 1546-1555 (ASSKAGEKLL) and 1597-1632 (RTSE…RIQK). Residues 1644–1663 (PGSTPQRDTEKAQASLQRQG) show a composition bias toward polar residues. Composition is skewed to basic and acidic residues over residues 1682–1698 (GEER…RPND) and 1717–1728 (KKSERLGSEKEV). The segment covering 1737–1747 (PGDSSQQPDTP) has biased composition (polar residues). 3 stretches are compositionally biased toward basic and acidic residues: residues 1748–1761 (NTEK…EHGS), 1796–1813 (GLER…RQNL), and 1872–1882 (ASDRASEKGEL). Residues 1937–1948 (RVSSQPLVSTGD) show a composition bias toward polar residues. The span at 1979-2007 (TETEMSRQDEKEKSQEEKERAPETRDHEG) shows a compositional bias: basic and acidic residues. The segment covering 2283–2293 (SPPPDYPWDCE) has biased composition (pro residues).

This sequence belongs to the G-protein coupled receptor 3 family. As to quaternary structure, homodimer. Associates with the R7 group RGS-GNB5 complexes, composed of an R7 group RGS subunit (RGS6, RGS7, RGS9 or RGS11) and GNB5, promoting their localization to the cell membrane and regulating the GTPase activator activity of R7 RGS proteins. Interacts with TRPM1. Interacts with GRM6. Interacts with EGFLAM; transsynaptic interaction is required for synaptic organization of photoreceptor cells.

The protein resides in the cell membrane. The protein localises to the postsynaptic cell membrane. Its subcellular location is the cell projection. It localises to the dendrite. Orphan receptor involved in vision. Required for signal transduction through retinal depolarizing bipolar cells. Acts as an atypical G-protein coupled receptor that recruits and regulates the R7 group RGS-GNB5 complexes instead of activating G proteins: promotes the GTPase activator activity of R7 RGS proteins, increasing the GTPase activity of G protein alpha subunits, thereby driving them into their inactive GDP-bound form. Associates with components of metabotropic signaling cascade in retina ON-bipolar neurons, such as TRPM1 and GRM6: may control the ability of the GRM6 cascade to gate TRPM1. The chain is G-protein coupled receptor 179 from Mus musculus (Mouse).